Consider the following 1938-residue polypeptide: Myosin-1 (1938 aa).

In terms of domain architecture, Myosin N-terminal SH3-like spans D33–P82. 2 positions are modified to phosphothreonine: T64 and T69. The Myosin motor domain maps to D86–D781. Position 130 is an N6,N6,N6-trimethyllysine (K130). G179–T186 contributes to the ATP binding site. Y389 carries the phosphotyrosine modification. At T419 the chain carries Phosphothreonine. The residue at position 424 (Y424) is a Phosphotyrosine. Phosphoserine is present on S625. The interval L658–E680 is actin-binding. Position 756 is a pros-methylhistidine (H756). Residues K760–G774 are actin-binding. The 30-residue stretch at L784–S813 folds into the IQ domain. Residues L842–E1938 are a coiled coil. Phosphoserine is present on residues S1091 and S1095. Disordered stretches follow at residues E1124 to L1146 and R1152 to E1171. A compositionally biased stretch (basic and acidic residues) spans A1127–L1146. A phosphoserine mark is found at S1161 and S1236. T1240 bears the Phosphothreonine mark. Position 1242 is a phosphoserine (S1242). Residue T1254 is modified to Phosphothreonine. The residue at position 1260 (S1260) is a Phosphoserine. T1285 bears the Phosphothreonine mark. Residues S1291, S1302, and S1305 each carry the phosphoserine modification. Y1463 carries the phosphotyrosine modification. Position 1466 is a phosphothreonine (T1466). Residue S1473 is modified to Phosphoserine. Y1491 carries the phosphotyrosine modification. S1494 carries the phosphoserine modification. T1500 is subject to Phosphothreonine. Position 1513 is a phosphoserine (S1513). T1516 carries the phosphothreonine modification. Residues S1541, S1553, S1573, S1713, and S1725 each carry the phosphoserine modification. Phosphothreonine occurs at positions 1729 and 1735. S1738 bears the Phosphoserine mark.

The protein belongs to the TRAFAC class myosin-kinesin ATPase superfamily. Myosin family. In terms of assembly, muscle myosin is a hexameric protein that consists of 2 heavy chain subunits (MHC), 2 alkali light chain subunits (MLC) and 2 regulatory light chain subunits (MLC-2). Interacts with SLC26A5.

Its subcellular location is the cytoplasm. It localises to the myofibril. Its function is as follows. Required for normal hearing. It plays a role in cochlear amplification of auditory stimuli, likely through the positive regulation of prestin (SLC26A5) activity and outer hair cell (OHC) electromotility. In Equus caballus (Horse), this protein is Myosin-1 (MYH1).